The following is a 397-amino-acid chain: Acetyl-CoA acetyltransferase, cytosolic (397 aa).

An N-acetylmethionine modification is found at Met1. The active-site Acyl-thioester intermediate is Cys92. Position 200 is an N6-acetyllysine (Lys200). CoA contacts are provided by Arg223 and Ser226. N6-acetyllysine is present on residues Lys233 and Lys235. Residue Ser252 coordinates CoA. The active-site Proton donor/acceptor is the Cys383.

Belongs to the thiolase-like superfamily. Thiolase family. In terms of assembly, homotetramer.

Its subcellular location is the cytoplasm. The protein localises to the cytosol. The enzyme catalyses 2 acetyl-CoA = acetoacetyl-CoA + CoA. It functions in the pathway lipid metabolism; fatty acid metabolism. In terms of biological role, involved in the biosynthetic pathway of cholesterol. The sequence is that of Acetyl-CoA acetyltransferase, cytosolic (Acat2) from Rattus norvegicus (Rat).